The chain runs to 804 residues: Leucine--tRNA ligase (804 aa).

The 'HIGH' region motif lies at Pro40 to His51. The 'KMSKS' region signature appears at Lys576–Ser580. Residue Lys579 participates in ATP binding.

This sequence belongs to the class-I aminoacyl-tRNA synthetase family.

Its subcellular location is the cytoplasm. The catalysed reaction is tRNA(Leu) + L-leucine + ATP = L-leucyl-tRNA(Leu) + AMP + diphosphate. This chain is Leucine--tRNA ligase, found in Bacillus velezensis (strain DSM 23117 / BGSC 10A6 / LMG 26770 / FZB42) (Bacillus amyloliquefaciens subsp. plantarum).